A 290-amino-acid chain; its full sequence is MRIADYSVTKAVLERHGFTFKKSFGQNFLTDTNILQKIVDTAEIDDQVNVIEIGPGIGALTEFLAERAAQVMTFEIDHRLVPILADTLRDFDNVTVVNEDILKVDLAQHIQNFKNPDLPIKVVANLPYYITTPILMHLIESGIPFSEFVVMMQKEVADRISAQPNTKAYGSLSIAVQYYMTAKVAFIVPRTVFVPAPNVDSAILKMVRRPEPAVAVEDENFFFKVSKASFTHRRKTLWNNLTGYFGKTEEVKDKLTKALDQAGLSPSVRGEALSLAEFAGLADALKGQGL.

S-adenosyl-L-methionine-binding residues include Asn27, Leu29, Gly54, Glu75, Asp100, and Asn125.

Belongs to the class I-like SAM-binding methyltransferase superfamily. rRNA adenine N(6)-methyltransferase family. RsmA subfamily.

Its subcellular location is the cytoplasm. The catalysed reaction is adenosine(1518)/adenosine(1519) in 16S rRNA + 4 S-adenosyl-L-methionine = N(6)-dimethyladenosine(1518)/N(6)-dimethyladenosine(1519) in 16S rRNA + 4 S-adenosyl-L-homocysteine + 4 H(+). In terms of biological role, specifically dimethylates two adjacent adenosines (A1518 and A1519) in the loop of a conserved hairpin near the 3'-end of 16S rRNA in the 30S particle. May play a critical role in biogenesis of 30S subunits. The chain is Ribosomal RNA small subunit methyltransferase A from Streptococcus pneumoniae (strain CGSP14).